The sequence spans 89 residues: UPF0473 protein Helmi_02360 (89 aa).

Belongs to the UPF0473 family.

The polypeptide is UPF0473 protein Helmi_02360 (Heliobacterium modesticaldum (strain ATCC 51547 / Ice1)).